A 266-amino-acid chain; its full sequence is Small ribosomal subunit protein uS2 (266 aa).

It belongs to the universal ribosomal protein uS2 family.

The polypeptide is Small ribosomal subunit protein uS2 (Paramagnetospirillum magneticum (strain ATCC 700264 / AMB-1) (Magnetospirillum magneticum)).